The primary structure comprises 331 residues: Ferredoxin--NADP reductase 2 (331 aa).

FAD contacts are provided by Glu37, Gln45, Tyr50, Val90, Phe124, Asp286, and Thr327.

The protein belongs to the ferredoxin--NADP reductase type 2 family. Homodimer. Requires FAD as cofactor.

It catalyses the reaction 2 reduced [2Fe-2S]-[ferredoxin] + NADP(+) + H(+) = 2 oxidized [2Fe-2S]-[ferredoxin] + NADPH. The protein is Ferredoxin--NADP reductase 2 of Listeria monocytogenes serovar 1/2a (strain ATCC BAA-679 / EGD-e).